Consider the following 357-residue polypeptide: UPF0283 membrane protein HS_0596 (357 aa).

Transmembrane regions (helical) follow at residues 67-87 (LMATICLFSCGILAQSVQWLV), 96-116 (IAFVFAMVSLFLVLLGLGAII), and 213-233 (AVESALIVAVSPLAIVDMFFI).

This sequence belongs to the UPF0283 family.

It localises to the cell inner membrane. In Histophilus somni (strain 129Pt) (Haemophilus somnus), this protein is UPF0283 membrane protein HS_0596.